The chain runs to 424 residues: NADH-quinone oxidoreductase subunit H (424 aa).

9 helical membrane-spanning segments follow: residues 11–31, 79–99, 119–139, 160–180, 193–213, 255–275, 283–303, 317–337, and 347–367; these read LVVAKAIAIFVFLMLTVLVAI, FVYFVAPIISVIPAFTAFAFI, LPVAVLFILGLSAIGVYGIVL, VISYEVAMGLSFAAVFLYAGS, VWYIFLLLPSFVIYLISMVGE, VSALAATLFLGGWHAPWPLNL, WWPVLWFTAKVWGFLFMYFWL, ALGWKLLIPVSLVWVLIAAVI, and YWTPALVVSSIVVAAILVMSL. The segment at 376–424 is disordered; sequence AVTKARRRGKQPAAGPDEQGALEPLFPTPPLPMKPLAQPVGASKENARG.

It belongs to the complex I subunit 1 family. In terms of assembly, NDH-1 is composed of 14 different subunits. Subunits NuoA, H, J, K, L, M, N constitute the membrane sector of the complex.

The protein resides in the cell membrane. The enzyme catalyses a quinone + NADH + 5 H(+)(in) = a quinol + NAD(+) + 4 H(+)(out). NDH-1 shuttles electrons from NADH, via FMN and iron-sulfur (Fe-S) centers, to quinones in the respiratory chain. The immediate electron acceptor for the enzyme in this species is believed to be menaquinone. Couples the redox reaction to proton translocation (for every two electrons transferred, four hydrogen ions are translocated across the cytoplasmic membrane), and thus conserves the redox energy in a proton gradient. This subunit may bind ubiquinone. The sequence is that of NADH-quinone oxidoreductase subunit H from Mycobacterium ulcerans (strain Agy99).